A 284-amino-acid chain; its full sequence is Lipoyl synthase (284 aa).

[4Fe-4S] cluster-binding residues include C38, C43, C49, C64, C68, C71, and S277. The 217-residue stretch at 50-266 (WSRGTATFLL…RDEALGMGFS (217 aa)) folds into the Radical SAM core domain.

Belongs to the radical SAM superfamily. Lipoyl synthase family. [4Fe-4S] cluster is required as a cofactor.

It localises to the cytoplasm. The catalysed reaction is [[Fe-S] cluster scaffold protein carrying a second [4Fe-4S](2+) cluster] + N(6)-octanoyl-L-lysyl-[protein] + 2 oxidized [2Fe-2S]-[ferredoxin] + 2 S-adenosyl-L-methionine + 4 H(+) = [[Fe-S] cluster scaffold protein] + N(6)-[(R)-dihydrolipoyl]-L-lysyl-[protein] + 4 Fe(3+) + 2 hydrogen sulfide + 2 5'-deoxyadenosine + 2 L-methionine + 2 reduced [2Fe-2S]-[ferredoxin]. The protein operates within protein modification; protein lipoylation via endogenous pathway; protein N(6)-(lipoyl)lysine from octanoyl-[acyl-carrier-protein]: step 2/2. Functionally, catalyzes the radical-mediated insertion of two sulfur atoms into the C-6 and C-8 positions of the octanoyl moiety bound to the lipoyl domains of lipoate-dependent enzymes, thereby converting the octanoylated domains into lipoylated derivatives. This chain is Lipoyl synthase, found in Chlorobium phaeovibrioides (strain DSM 265 / 1930) (Prosthecochloris vibrioformis (strain DSM 265)).